Reading from the N-terminus, the 240-residue chain is Aspartate/glutamate leucyltransferase (240 aa).

The protein belongs to the R-transferase family. Bpt subfamily.

The protein localises to the cytoplasm. The enzyme catalyses N-terminal L-glutamyl-[protein] + L-leucyl-tRNA(Leu) = N-terminal L-leucyl-L-glutamyl-[protein] + tRNA(Leu) + H(+). The catalysed reaction is N-terminal L-aspartyl-[protein] + L-leucyl-tRNA(Leu) = N-terminal L-leucyl-L-aspartyl-[protein] + tRNA(Leu) + H(+). In terms of biological role, functions in the N-end rule pathway of protein degradation where it conjugates Leu from its aminoacyl-tRNA to the N-termini of proteins containing an N-terminal aspartate or glutamate. This chain is Aspartate/glutamate leucyltransferase, found in Thiobacillus denitrificans (strain ATCC 25259 / T1).